A 332-amino-acid polypeptide reads, in one-letter code: DNA packaging protein (332 aa).

Residues 1–207 (MDKSLFYNPQ…SERRKTRFGR (207 aa)) form an ATPase region. Residue 24–31 (GARGIGKS) coordinates ATP. The interval 233–332 (KRSKDSKFVF…YELFRKMRIQ (100 aa)) is DNA-binding.

The protein belongs to the phi29likevirus gp16 family. Homopentamer. Interacts with the packaging RNA (pRNA). Part of a DNA-gp3-gp16 complex.

It carries out the reaction ATP + H2O = ADP + phosphate + H(+). Its function is as follows. ATPase required for the genome encapsidation reaction. Part of the active packaging motor via the binding to the packaging RNA (pRNA), itself fixed to the head-tail connector at the unique portal vertex of the prohead. Binds and supercoils the pre-formed, unit-length DNA bound to gp3 to produce an initiation complex for DNA packaging. Provides the energy to actively pump the viral DNA into the prohead. Approximately one molecule of ATP is used in the packaging of 2 bp of viral DNA. ATP hydrolysis results in a conformational change that causes the arginine/lysine finger of one subunit to move into the active site of its neighbor, where it interacts with the negatively charged oxygens on the gamma-phosphate of ATP. After packaging, the ATPase and the pRNA are released from the prohead. The protein is DNA packaging protein (16) of Bacillus phage phi29 (Bacteriophage phi-29).